We begin with the raw amino-acid sequence, 479 residues long: Probable acyl-CoA desaturase (479 aa).

The segment covering 1–18 has biased composition (low complexity); that stretch reads MTAPSATAFSSATTQPTT. The disordered stretch occupies residues 1–28; it reads MTAPSATAFSSATTQPTTEGNASMRKRT. At 1-61 the chain is on the cytoplasmic side; the sequence is MTAPSATAFS…PWTMQNWWRH (61 aa). A helical transmembrane segment spans residues 62–82; sequence LNWLHCMLIFGLPMIAIYGVF. Topologically, residues 83-89 are lumenal; it reads TTPLQTK. The helical transmembrane segment at 90–110 threads the bilayer; it reads TLIFAIIYYAYSGLGITAGYH. Fe cation contacts are provided by histidine 110, histidine 115, histidine 147, histidine 150, and histidine 151. The Histidine box-1 signature appears at 110 to 115; it reads HRLWSH. The Cytoplasmic segment spans residues 111–204; the sequence is RLWSHRAYKA…DPFVMFNHRH (94 aa). A Histidine box-2 motif is present at residues 147 to 151; sequence HRAHH. A helical transmembrane segment spans residues 205–225; that stretch reads FLPIASFMAFIFPSLFCGLLW. Residues 226-229 lie on the Lumenal side of the membrane; sequence GDYR. A helical membrane pass occupies residues 230–250; the sequence is GGYFYAGVCRLVFVHHATFCV. Topologically, residues 251–479 are cytoplasmic; that stretch reads NSLAHLIGSQ…QPPIEAAAAN (229 aa). Residues histidine 255, histidine 284, histidine 287, and histidine 288 each contribute to the Fe cation site. The Histidine box-3 motif lies at 284–288; that stretch reads HNYHH. Residues 357 to 433 enclose the Cytochrome b5 heme-binding domain; the sequence is QLPVMEFEDF…LSTYRVAVVR (77 aa). Heme is bound by residues histidine 390 and histidine 416.

The protein belongs to the fatty acid desaturase type 1 family. Requires Fe(2+) as cofactor.

It localises to the membrane. The catalysed reaction is octadecanoyl-CoA + 2 Fe(II)-[cytochrome b5] + O2 + 2 H(+) = (9Z)-octadecenoyl-CoA + 2 Fe(III)-[cytochrome b5] + 2 H2O. In terms of biological role, stearoyl-CoA desaturase that utilizes O(2) and electrons from reduced cytochrome b5 to introduce the first double bond into saturated fatty acyl-CoA substrates. Catalyzes the insertion of a cis double bond at the delta-9 position into fatty acyl-CoA substrates including palmitoyl-CoA and stearoyl-CoA. Contributes to the biosynthesis of membrane phospholipids, cholesterol esters and triglycerides. The chain is Probable acyl-CoA desaturase from Schizosaccharomyces pombe (strain 972 / ATCC 24843) (Fission yeast).